Reading from the N-terminus, the 291-residue chain is tRNA pseudouridine synthase-like 1 (291 aa).

Catalysis depends on Asp66, which acts as the Nucleophile. Residue Tyr130 coordinates substrate.

Belongs to the tRNA pseudouridine synthase TruA family.

The enzyme catalyses a uridine in tRNA = a pseudouridine in tRNA. The chain is tRNA pseudouridine synthase-like 1 (Pusl1) from Mus musculus (Mouse).